Consider the following 510-residue polypeptide: ATP synthase subunit alpha (510 aa).

Position 169–176 (169–176 (GDRQTGKT)) interacts with ATP.

The protein belongs to the ATPase alpha/beta chains family. In terms of assembly, F-type ATPases have 2 components, CF(1) - the catalytic core - and CF(0) - the membrane proton channel. CF(1) has five subunits: alpha(3), beta(3), gamma(1), delta(1), epsilon(1). CF(0) has three main subunits: a(1), b(2) and c(9-12). The alpha and beta chains form an alternating ring which encloses part of the gamma chain. CF(1) is attached to CF(0) by a central stalk formed by the gamma and epsilon chains, while a peripheral stalk is formed by the delta and b chains.

It is found in the cell inner membrane. It catalyses the reaction ATP + H2O + 4 H(+)(in) = ADP + phosphate + 5 H(+)(out). Produces ATP from ADP in the presence of a proton gradient across the membrane. The alpha chain is a regulatory subunit. This is ATP synthase subunit alpha from Afipia carboxidovorans (strain ATCC 49405 / DSM 1227 / KCTC 32145 / OM5) (Oligotropha carboxidovorans).